A 553-amino-acid chain; its full sequence is Pumilio domain-containing protein 5 (553 aa).

Pumilio repeat units follow at residues 146–184 (DVVS…VLFD), 185–223 (KLTE…RLVR), 224–260 (KMCD…KLVE), 261–296 (KISS…SFFV), 297–335 (KFLC…HCFN), 347–384 (SVAR…TIIE), 386–421 (CLLR…EMMD), and 432–472 (ETNR…KMVA). Positions 499 to 514 (FSSGKKIIESLQKLNV) are RNA-binding.

Detected in differentiating oocytes with highest levels observed in developing ooctyes in the distal portion of the proximal gonad.

It is found in the cytoplasm. Its subcellular location is the P-body. Its function is as follows. RNA-binding protein that binds to the consensus sequence 5'-CUCUGUAUCUUGU-3' in mRNA 3'-UTRs and modulates mRNA expression and stability. Functions redundantly with puf-6 and puf-7 in oocyte formation and organization, early embryonic cell divisions, and repression of expression of glp-1 and other maternal mRNAs in late oogenesis. The sequence is that of Pumilio domain-containing protein 5 from Caenorhabditis elegans.